A 115-amino-acid polypeptide reads, in one-letter code: NADH-ubiquinone oxidoreductase chain 3 (115 aa).

The next 3 helical transmembrane spans lie at 5 to 25 (TALL…FWFF), 55 to 75 (FFLV…LLPL), and 86 to 106 (IMML…AYEW).

It belongs to the complex I subunit 3 family. As to quaternary structure, core subunit of respiratory chain NADH dehydrogenase (Complex I) which is composed of 45 different subunits. Interacts with TMEM186. Interacts with TMEM242.

The protein localises to the mitochondrion inner membrane. It carries out the reaction a ubiquinone + NADH + 5 H(+)(in) = a ubiquinol + NAD(+) + 4 H(+)(out). In terms of biological role, core subunit of the mitochondrial membrane respiratory chain NADH dehydrogenase (Complex I) which catalyzes electron transfer from NADH through the respiratory chain, using ubiquinone as an electron acceptor. Essential for the catalytic activity of complex I. The polypeptide is NADH-ubiquinone oxidoreductase chain 3 (Peromyscus sejugis (Santa Cruz mouse)).